A 468-amino-acid polypeptide reads, in one-letter code: Bifunctional protein GlmU (468 aa).

The interval 1–233 (MAQAGSASPL…LEEANLVNDR (233 aa)) is pyrophosphorylase. UDP-N-acetyl-alpha-D-glucosamine contacts are provided by residues 15–18 (LAAG), Lys-29, Gln-79, and 84–85 (GT). Asp-109 provides a ligand contact to Mg(2+). UDP-N-acetyl-alpha-D-glucosamine is bound by residues Gly-146, Glu-159, Asn-174, and Asn-231. Asn-231 is a Mg(2+) binding site. Residues 234–254 (SQLARAEEILRRRILDAHMKE) are linker. The interval 255–468 (GVTVRDPVST…GDRRRARTEG (214 aa)) is N-acetyltransferase. Residues Arg-336 and Lys-354 each coordinate UDP-N-acetyl-alpha-D-glucosamine. The active-site Proton acceptor is the His-366. UDP-N-acetyl-alpha-D-glucosamine-binding residues include Tyr-369 and Asn-380. Residues Ala-383, 389–390 (NY), and Ala-426 each bind acetyl-CoA.

This sequence in the N-terminal section; belongs to the N-acetylglucosamine-1-phosphate uridyltransferase family. It in the C-terminal section; belongs to the transferase hexapeptide repeat family. In terms of assembly, homotrimer. Requires Mg(2+) as cofactor.

It localises to the cytoplasm. It catalyses the reaction alpha-D-glucosamine 1-phosphate + acetyl-CoA = N-acetyl-alpha-D-glucosamine 1-phosphate + CoA + H(+). The enzyme catalyses N-acetyl-alpha-D-glucosamine 1-phosphate + UTP + H(+) = UDP-N-acetyl-alpha-D-glucosamine + diphosphate. Its pathway is nucleotide-sugar biosynthesis; UDP-N-acetyl-alpha-D-glucosamine biosynthesis; N-acetyl-alpha-D-glucosamine 1-phosphate from alpha-D-glucosamine 6-phosphate (route II): step 2/2. The protein operates within nucleotide-sugar biosynthesis; UDP-N-acetyl-alpha-D-glucosamine biosynthesis; UDP-N-acetyl-alpha-D-glucosamine from N-acetyl-alpha-D-glucosamine 1-phosphate: step 1/1. It functions in the pathway bacterial outer membrane biogenesis; LPS lipid A biosynthesis. Catalyzes the last two sequential reactions in the de novo biosynthetic pathway for UDP-N-acetylglucosamine (UDP-GlcNAc). The C-terminal domain catalyzes the transfer of acetyl group from acetyl coenzyme A to glucosamine-1-phosphate (GlcN-1-P) to produce N-acetylglucosamine-1-phosphate (GlcNAc-1-P), which is converted into UDP-GlcNAc by the transfer of uridine 5-monophosphate (from uridine 5-triphosphate), a reaction catalyzed by the N-terminal domain. This chain is Bifunctional protein GlmU, found in Rubrobacter xylanophilus (strain DSM 9941 / JCM 11954 / NBRC 16129 / PRD-1).